The chain runs to 84 residues: Large ribosomal subunit protein bL28 (84 aa).

This sequence belongs to the bacterial ribosomal protein bL28 family.

The polypeptide is Large ribosomal subunit protein bL28 (Clostridium perfringens (strain 13 / Type A)).